We begin with the raw amino-acid sequence, 296 residues long: Claudin-23 (296 aa).

At 1–2 the chain is on the cytoplasmic side; the sequence is MR. Residues 3–23 traverse the membrane as a helical segment; sequence TPVVMTLGMVLTPCGLLLNLV. Topologically, residues 24 to 81 are extracellular; the sequence is STLAPGWRLVKGFLDQPVDVVLYQGLWDICREQSSRERECGQPDEWNYFQTQPVQVAR. A helical transmembrane segment spans residues 82-102; it reads GLMITSLATTALGLLLASLGV. Residues 103–111 are Cytoplasmic-facing; sequence RCWQDEPHY. The chain crosses the membrane as a helical span at residues 112–132; that stretch reads GLAGLSGVVFFVAGLFSLIPV. At 133 to 160 the chain is on the extracellular side; that stretch reads SWYNHFLSDPDVLAAPSSPVTVQVSYSL. The helical transmembrane segment at 161-181 threads the bilayer; it reads VLGYLGSCLLLLGGFSLALSF. At 182 to 296 the chain is on the cytoplasmic side; that stretch reads APWCEERCRR…QNSLPCDSDL (115 aa). The disordered stretch occupies residues 224–296; it reads YSDGQHRPPP…QNSLPCDSDL (73 aa). Over residues 273–284 the composition is skewed to low complexity; sequence TSQGGSSSRSTR. The segment covering 285-296 has biased composition (polar residues); it reads PCQNSLPCDSDL.

It belongs to the claudin family.

It localises to the cell junction. Its subcellular location is the tight junction. The protein resides in the cell membrane. In terms of biological role, plays a major role in tight junction-specific obliteration of the intercellular space, through calcium-independent cell-adhesion activity. This chain is Claudin-23 (Cldn23), found in Mus musculus (Mouse).